An 88-amino-acid chain; its full sequence is Small ribosomal subunit protein uS17 (88 aa).

Belongs to the universal ribosomal protein uS17 family. In terms of assembly, part of the 30S ribosomal subunit.

In terms of biological role, one of the primary rRNA binding proteins, it binds specifically to the 5'-end of 16S ribosomal RNA. The polypeptide is Small ribosomal subunit protein uS17 (Oenococcus oeni (strain ATCC BAA-331 / PSU-1)).